A 682-amino-acid chain; its full sequence is Potassium-transporting ATPase ATP-binding subunit (682 aa).

The next 4 helical transmembrane spans lie at Pro34–Ala54, Ala62–Ala82, Ile219–Leu239, and Val254–Ile274. Asp307 serves as the catalytic 4-aspartylphosphate intermediate. ATP is bound by residues Asp344, Glu348, Phe377–Ser384, and Lys395. Asp518 and Asp522 together coordinate Mg(2+). A run of 3 helical transmembrane segments spans residues Phe588–Met608, Ala616–Leu636, and Leu662–Val682.

The protein belongs to the cation transport ATPase (P-type) (TC 3.A.3) family. Type IA subfamily. As to quaternary structure, the system is composed of three essential subunits: KdpA, KdpB and KdpC.

It is found in the cell inner membrane. It carries out the reaction K(+)(out) + ATP + H2O = K(+)(in) + ADP + phosphate + H(+). In terms of biological role, part of the high-affinity ATP-driven potassium transport (or Kdp) system, which catalyzes the hydrolysis of ATP coupled with the electrogenic transport of potassium into the cytoplasm. This subunit is responsible for energy coupling to the transport system and for the release of the potassium ions to the cytoplasm. The protein is Potassium-transporting ATPase ATP-binding subunit of Enterobacter sp. (strain 638).